A 79-amino-acid polypeptide reads, in one-letter code: Acyl carrier protein (79 aa).

The Carrier domain maps to 1 to 76; it reads MEVFEEVRDV…DVVTYIENLN (76 aa). At serine 36 the chain carries O-(pantetheine 4'-phosphoryl)serine.

This sequence belongs to the acyl carrier protein (ACP) family. Post-translationally, 4'-phosphopantetheine is transferred from CoA to a specific serine of apo-ACP by AcpS. This modification is essential for activity because fatty acids are bound in thioester linkage to the sulfhydryl of the prosthetic group.

It is found in the cytoplasm. Its pathway is lipid metabolism; fatty acid biosynthesis. Carrier of the growing fatty acid chain in fatty acid biosynthesis. The polypeptide is Acyl carrier protein (Campylobacter hominis (strain ATCC BAA-381 / DSM 21671 / CCUG 45161 / LMG 19568 / NCTC 13146 / CH001A)).